We begin with the raw amino-acid sequence, 710 residues long: Conserved oligomeric Golgi complex subunit 2 (710 aa).

This sequence belongs to the COG2 family. As to quaternary structure, component of the conserved oligomeric Golgi complex which is composed of eight different subunits and is required for normal Golgi morphology and localization.

It localises to the golgi apparatus membrane. In terms of biological role, required for normal Golgi morphology and function. The sequence is that of Conserved oligomeric Golgi complex subunit 2 from Drosophila melanogaster (Fruit fly).